The primary structure comprises 219 residues: Ras-related protein Rab-3B (219 aa).

N-acetylalanine is present on Ala-2. The GTP site is built by Ser-31, Ser-32, Val-33, Gly-34, Lys-35, Thr-36, Ser-37, Pro-49, and Ser-53. Ser-32 provides a ligand contact to GDP. GDP-binding residues include Gly-34, Lys-35, Thr-36, and Ser-37. Thr-36 lines the Mg(2+) pocket. Positions 45–58 (DTFTPAFVSTVGID) match the Switch 1 motif. Residues Thr-54 and Asp-77 each coordinate Mg(2+). Positions 78 to 96 (TAGQERYRTITTAYYRGAM) match the Switch 2 motif. Gly-80 is a binding site for GTP. Residue Thr-86 is modified to Phosphothreonine; by LRRK2. GTP contacts are provided by Asn-135, Lys-136, and Asp-138. GDP-binding residues include Asn-135, Lys-136, Asp-138, Met-139, Ala-166, and Lys-167. Positions 166 and 167 each coordinate GTP. Ser-188 and Ser-190 each carry phosphoserine. Residues Cys-217 and Cys-219 are each lipidated (S-geranylgeranyl cysteine). The residue at position 219 (Cys-219) is a Cysteine methyl ester.

It belongs to the small GTPase superfamily. Rab family. In terms of assembly, interacts with RIMS1, RIMS2, RPH3A and RPH3AL. The GTP-bound form interacts with GAS8/DRC4 (via coiled-coil domains). The GTP-bound form interacts with REP15. Interacts with GDI2, CHM and CHML; phosphorylation at Thr-86 disrupts these interactions. Interacts with MADD (via uDENN domain); the GTP-bound form is preferred for interaction. It depends on Mg(2+) as a cofactor. Phosphorylation of Thr-86 in the switch II region by LRRK2 prevents the association of RAB regulatory proteins, including CHM, CHML and RAB GDP dissociation inhibitor GDI2.

It is found in the cell membrane. Its subcellular location is the golgi apparatus. It catalyses the reaction GTP + H2O = GDP + phosphate + H(+). Its activity is regulated as follows. Regulated by guanine nucleotide exchange factors (GEFs) which promote the exchange of bound GDP for free GTP. Regulated by GTPase activating proteins (GAPs) which increase the GTP hydrolysis activity. Inhibited by GDP dissociation inhibitors (GDIs) which prevent Rab-GDP dissociation. Its function is as follows. The small GTPases Rab are key regulators of intracellular membrane trafficking, from the formation of transport vesicles to their fusion with membranes. Rabs cycle between an inactive GDP-bound form and an active GTP-bound form that is able to recruit to membranes different sets of downstream effectors directly responsible for vesicle formation, movement, tethering and fusion. This Homo sapiens (Human) protein is Ras-related protein Rab-3B.